The chain runs to 419 residues: S-adenosylmethionine synthase (419 aa).

Position 15 (His-15) interacts with ATP. Residue Asp-17 coordinates Mg(2+). Glu-43 contributes to the K(+) binding site. Residues Glu-56 and Gln-100 each contribute to the L-methionine site. Positions 100 to 110 (QSPDIAQGVDE) are flexible loop. ATP is bound by residues 171–173 (DGK), 248–249 (KF), Asp-257, 263–264 (RK), Ala-280, and Lys-284. Residue Asp-257 coordinates L-methionine. Lys-288 serves as a coordination point for L-methionine.

Belongs to the AdoMet synthase family. In terms of assembly, homotetramer; dimer of dimers. The cofactor is Mg(2+). K(+) serves as cofactor.

The protein localises to the cytoplasm. It catalyses the reaction L-methionine + ATP + H2O = S-adenosyl-L-methionine + phosphate + diphosphate. The protein operates within amino-acid biosynthesis; S-adenosyl-L-methionine biosynthesis; S-adenosyl-L-methionine from L-methionine: step 1/1. Catalyzes the formation of S-adenosylmethionine (AdoMet) from methionine and ATP. The overall synthetic reaction is composed of two sequential steps, AdoMet formation and the subsequent tripolyphosphate hydrolysis which occurs prior to release of AdoMet from the enzyme. The chain is S-adenosylmethionine synthase from Synechococcus sp. (strain WH7803).